The chain runs to 838 residues: Glutenin, high molecular weight subunit PW212 (838 aa).

The first 21 residues, 1–21 (MAKRLVLFVAVVVALVALTVA), serve as a signal peptide directing secretion. The interval 122 to 794 (SYYPGQASPQ…GQQSGQGQQG (673 aa)) is disordered. Residues 125-136 (PGQASPQRPGQG) are compositionally biased toward low complexity. Over residues 137 to 149 (QQPGQGQQSGQGQ) the composition is skewed to gly residues. Low complexity-rich tracts occupy residues 150–172 (QGYY…GQPG), 179–208 (QQPG…GQPG), 215–245 (QLQP…PGQG), 268–308 (QGQQ…GQSG), 315–356 (QQPG…PGQG), 364–416 (PGYY…PGQG), 445–473 (SPQQ…PGQG), 481–532 (QGQQ…YPTS), 549–643 (QQPG…QGQP), 654–677 (GQGQ…GQPG), 699–719 (QQPG…GQHG), and 729–773 (GQGQ…GQQG).

This sequence belongs to the gliadin/glutenin family. In terms of assembly, disulfide-bridge linked aggregates.

Functionally, glutenins are high-molecular weight seed storage proteins of wheat endosperm. Thought to be responsible for the visco-elastic property of wheat dough. This chain is Glutenin, high molecular weight subunit PW212, found in Triticum aestivum (Wheat).